The primary structure comprises 687 residues: Putative mitochondrial carnitine O-acetyltransferase (687 aa).

H346 serves as the catalytic Proton acceptor. G446–D459 serves as a coordination point for CoA. Y481 and T494 together coordinate (R)-carnitine. A Phosphoserine modification is found at S517.

This sequence belongs to the carnitine/choline acetyltransferase family.

Its subcellular location is the mitochondrion inner membrane. The enzyme catalyses (R)-carnitine + acetyl-CoA = O-acetyl-(R)-carnitine + CoA. Its function is as follows. Involved in the transfer of acetyl-CoA into mitochondria. May also be involved in the metabolism of acetate and of ethanol. This chain is Putative mitochondrial carnitine O-acetyltransferase (YAT1), found in Saccharomyces cerevisiae (strain ATCC 204508 / S288c) (Baker's yeast).